The sequence spans 152 residues: MTQLCPCGSALEYSLCCQRYLSGDQLAPDPSHLMRSRYTAFVIKDADYLIKTWHPSCQAADFRQEIVSGFTNTQWQGLTIYETSIGQTAKEGFVSFVARFIEHDKPGAIIERSRFILEGGQWYYIDGTRPQFSRNDACPCGSGKKFKKCCGQ.

Belongs to the UPF0225 family.

This chain is UPF0225 protein Ent638_2310, found in Enterobacter sp. (strain 638).